Consider the following 327-residue polypeptide: 2-oxoglutarate-dependent dioxygenase traH (327 aa).

One can recognise a Fe2OG dioxygenase domain in the interval 183 to 290 (TTDAAMFLKL…YAVPAFWHGD (108 aa)). Residues H211, D213, and H270 each coordinate Fe cation. R280 provides a ligand contact to 2-oxoglutarate.

Belongs to the iron/ascorbate-dependent oxidoreductase family. The cofactor is Fe(2+).

Its pathway is secondary metabolite biosynthesis. 2-oxoglutarate-dependent dioxygenase; part of the tra gene cluster that produces terrestric acid. The clavatol biosynthesis cluster cla and the terrestric acid cluster tra are both involved in the production of peniphenones and penilactones. The non-reducing PKS claF is responsible for the formation of clavatol from successive condensations of 3 malonyl-CoA units, presumably with a simple acetyl-CoA starter unit, and 2 methylation steps. The esterase claE probably collaborates with claF by catalyzing the hydrolysis of ACP-bound acyl intermediates to free the ACP from stalled intermediates. The clavatol oxidase claD then converts clavatol to hydroxyclavatol. Spontaneous dehydration of hydroxyclavatol leads to the accumulation of the highly active ortho-quinone methide. On the other hand, the PKS-NRPS hybrid traA is involved in the formation of crustosic acid, with the help of traB and traD. The polyketide synthase module (PKS) of traA is responsible for the synthesis of the polyketide backbone via the condensation of an acetyl-CoA starter unit with 3 malonyl-CoA units. The downstream nonribosomal peptide synthetase (NRPS) module then amidates the carboxyl end of the polyketide with L-malic acid. Because traA lacks a designated enoylreductase (ER) domain, the required activity is provided the enoyl reductase traG. Crustosic acid undergoes decarboxylation and isomerization to the terrestric acid, catalyzed by the 2-oxoglutarate-dependent dioxygenase traH. Both acids are further converted to the 2 gamma-butyrolactones (R)-5-methyltetronic acid and (S)-5-carboxylmethyltetronic acid, with involvement of the cytochrome P450 monooxygenase claJ. Spontaneous addition of the methide to these gamma-butyrolactones leads to peniphenone D and penilactone D, which undergo again stereospecific attacking by methide to give penilactones A and B. The chain is 2-oxoglutarate-dependent dioxygenase traH from Penicillium crustosum (Blue mold fungus).